The primary structure comprises 893 residues: UPF0182 protein CLD_0809 (893 aa).

Helical transmembrane passes span 9 to 29, 49 to 69, 94 to 114, 154 to 174, 202 to 222, 246 to 266, and 273 to 293; these read IPLF…NFII, AIII…WMYY, LFFI…SSSY, VIIS…FILE, LAIV…IKIW, FYKI…LSIV, and VSIC…ASFL.

The protein belongs to the UPF0182 family.

It is found in the cell membrane. In Clostridium botulinum (strain Okra / Type B1), this protein is UPF0182 protein CLD_0809.